A 227-amino-acid chain; its full sequence is Germin-like protein subfamily 1 member 3 (227 aa).

The first 24 residues, 1–24, serve as a signal peptide directing secretion; that stretch reads MKYPFQCFLAKIILLALASSFVSC. C34 and C50 are oxidised to a cystine. The region spanning 64–212 is the Cupin type-1 domain; the sequence is SGLNIPGNTN…AFALDINIVR (149 aa). Mn(2+) is bound by residues H109, H111, and E116. N136 carries N-linked (GlcNAc...) asparagine glycosylation. Residue H160 coordinates Mn(2+).

The protein belongs to the germin family. As to quaternary structure, oligomer (believed to be a pentamer but probably hexamer).

It is found in the secreted. It localises to the extracellular space. Its subcellular location is the apoplast. Functionally, may play a role in plant defense. Probably has no oxalate oxidase activity even if the active site is conserved. The chain is Germin-like protein subfamily 1 member 3 from Arabidopsis thaliana (Mouse-ear cress).